Consider the following 443-residue polypeptide: UDP-N-acetylmuramoylalanine--D-glutamate ligase (443 aa).

ATP is bound at residue 116–122 (GTNGKST).

This sequence belongs to the MurCDEF family.

It localises to the cytoplasm. It carries out the reaction UDP-N-acetyl-alpha-D-muramoyl-L-alanine + D-glutamate + ATP = UDP-N-acetyl-alpha-D-muramoyl-L-alanyl-D-glutamate + ADP + phosphate + H(+). It functions in the pathway cell wall biogenesis; peptidoglycan biosynthesis. In terms of biological role, cell wall formation. Catalyzes the addition of glutamate to the nucleotide precursor UDP-N-acetylmuramoyl-L-alanine (UMA). The sequence is that of UDP-N-acetylmuramoylalanine--D-glutamate ligase from Novosphingobium aromaticivorans (strain ATCC 700278 / DSM 12444 / CCUG 56034 / CIP 105152 / NBRC 16084 / F199).